A 318-amino-acid polypeptide reads, in one-letter code: Protease HtpX homolog (318 aa).

The next 2 membrane-spanning stretches (helical) occupy residues 6-26 (TAML…LIGG) and 28-48 (AGMM…YWNS). Residue His130 participates in Zn(2+) binding. Residue Glu131 is part of the active site. His134 is a Zn(2+) binding site. Transmembrane regions (helical) follow at residues 145–165 (ITAT…FFGG) and 173–193 (PLGF…AMLV). Residue Glu202 coordinates Zn(2+). The segment at 284–318 (NVSTGPVRAVNPTRKSRSVPNTGRGGSQPPRGPWS) is disordered.

Belongs to the peptidase M48B family. The cofactor is Zn(2+).

It localises to the cell inner membrane. In Rhizobium etli (strain CIAT 652), this protein is Protease HtpX homolog.